Consider the following 450-residue polypeptide: C4-dicarboxylate transport protein (450 aa).

The next 8 helical transmembrane spans lie at 25–45, 56–76, 90–110, 162–182, 200–220, 234–254, 319–339, and 367–387; these read VVFA…YGAA, LIKM…IASM, MAYF…VANV, ILQV…VGDA, LVNI…AFTI, LVLT…GAVA, IYMT…LTLG, and AATL…ILGV.

It belongs to the dicarboxylate/amino acid:cation symporter (DAACS) (TC 2.A.23) family.

The protein localises to the cell inner membrane. Its function is as follows. Responsible for the transport of dicarboxylates such as succinate, fumarate, and malate from the periplasm across the membrane. The protein is C4-dicarboxylate transport protein of Acidovorax ebreus (strain TPSY) (Diaphorobacter sp. (strain TPSY)).